Reading from the N-terminus, the 462-residue chain is MDKKQLLRNLPKIDELLKEEIINRYLQENSRTLVVDSLRQSIDHYRGEILKNNIDSFTRENVVNYFIDTLEENKSTKFKKVINATGVVIHTNLGRSLLAKEAIENVVKVSENYSNLEYDLRKGKRGSRYSHVEELIKKVTGAEAAMVVNNNAAAVMLALNTLCEEREAIVSRGQLVEIGGSFRVPDVMKFSRAHLVEVGTTNRTHLYDYENNINENTGVLLKVHTSNFKIMGFTEEVSSEEMVQLGEKYKLPVMEDIGSGTLVDFSKYGFTYEPTVQSSLEKGVDVVTFSGDKMLGGPQAGIIVGKKKYIDKMKKNQLTRALRIDKMTLAALEGTLKCYIDEKEAIENIPTLNMILSSKDIHKKRAQRLKRRLQNNVKDFNFKVSEDLSMVGGGSMPGERIPTYVVKVNSDKITAEKIEEKLRLSKDPIIVRVSKDEVILDVRTLFERDFNIIVEEFKKLLK.

Lysine 293 bears the N6-(pyridoxal phosphate)lysine mark.

Belongs to the SelA family. Pyridoxal 5'-phosphate serves as cofactor.

Its subcellular location is the cytoplasm. The catalysed reaction is L-seryl-tRNA(Sec) + selenophosphate + H(+) = L-selenocysteinyl-tRNA(Sec) + phosphate. Its pathway is aminoacyl-tRNA biosynthesis; selenocysteinyl-tRNA(Sec) biosynthesis; selenocysteinyl-tRNA(Sec) from L-seryl-tRNA(Sec) (bacterial route): step 1/1. Functionally, converts seryl-tRNA(Sec) to selenocysteinyl-tRNA(Sec) required for selenoprotein biosynthesis. This is L-seryl-tRNA(Sec) selenium transferase from Clostridium botulinum (strain 657 / Type Ba4).